Here is a 145-residue protein sequence, read N- to C-terminus: MIALIQRALSASVVVEGNIVGEIGPGLLVLLGVEQGDTEQKAQRLCERVLGYRIFSDENDKMNLNVQQAGGSVLVVSQFTLVADTQKGMRPSFSRGAIPQEADRLYQYFVAQCRERGVKTETGLFAADMKVSLVNDGPVTFWLQV.

A Gly-cisPro motif, important for rejection of L-amino acids motif is present at residues 137 to 138; the sequence is GP.

This sequence belongs to the DTD family. In terms of assembly, homodimer.

Its subcellular location is the cytoplasm. The enzyme catalyses glycyl-tRNA(Ala) + H2O = tRNA(Ala) + glycine + H(+). It catalyses the reaction a D-aminoacyl-tRNA + H2O = a tRNA + a D-alpha-amino acid + H(+). Functionally, an aminoacyl-tRNA editing enzyme that deacylates mischarged D-aminoacyl-tRNAs. Also deacylates mischarged glycyl-tRNA(Ala), protecting cells against glycine mischarging by AlaRS. Acts via tRNA-based rather than protein-based catalysis; rejects L-amino acids rather than detecting D-amino acids in the active site. By recycling D-aminoacyl-tRNA to D-amino acids and free tRNA molecules, this enzyme counteracts the toxicity associated with the formation of D-aminoacyl-tRNA entities in vivo and helps enforce protein L-homochirality. The sequence is that of D-aminoacyl-tRNA deacylase from Yersinia pestis bv. Antiqua (strain Antiqua).